The following is a 124-amino-acid chain: MVWWDDPDDAFCEDPFDPEGDYGALQVGKQPMNRYVICYDIVDDKRRLKVAKCLDSYGSRVQFSVFEVLVSKPLMTRMVRELGALINAKTDRISIYPQCATCDARRTDLGATVEKPVHEPWIIV.

Aspartate 40 serves as a coordination point for Mg(2+).

The protein belongs to the CRISPR-associated endoribonuclease Cas2 protein family. Homodimer, forms a heterotetramer with a Cas1 homodimer. Mg(2+) serves as cofactor.

In terms of biological role, CRISPR (clustered regularly interspaced short palindromic repeat), is an adaptive immune system that provides protection against mobile genetic elements (viruses, transposable elements and conjugative plasmids). CRISPR clusters contain sequences complementary to antecedent mobile elements and target invading nucleic acids. CRISPR clusters are transcribed and processed into CRISPR RNA (crRNA). Functions as a ssRNA-specific endoribonuclease. Involved in the integration of spacer DNA into the CRISPR cassette. In Rhodospirillum rubrum (strain ATCC 11170 / ATH 1.1.1 / DSM 467 / LMG 4362 / NCIMB 8255 / S1), this protein is CRISPR-associated endoribonuclease Cas2 4.